The chain runs to 177 residues: Putative HVA22-like protein g (177 aa).

The tract at residues 145-165 (QSTPKSKAEEKKETTIPKLDD) is disordered. The segment covering 150–165 (SKAEEKKETTIPKLDD) has biased composition (basic and acidic residues).

The protein belongs to the DP1 family.

This Arabidopsis thaliana (Mouse-ear cress) protein is Putative HVA22-like protein g (HVA22G).